The chain runs to 269 residues: Peptide deformylase 1A, chloroplastic/mitochondrial (269 aa).

A chloroplast and mitochondrion-targeting transit peptide spans 1–60 (MGLHRDEATAMETLFRVSLRLLPVSAAVTCRSIRFPVSRPGSSHLLNRKLYNLPTSSSSS). Substrate is bound by residues 123 to 126 (PGVG) and Gly187. Cys188 is a binding site for Zn(2+). The segment at 191-196 (VDGFRA) is dimerization. A Zn(2+)-binding site is contributed by His230. Residue Glu231 is part of the active site. His234 provides a ligand contact to Zn(2+). Residues 236–254 (DGNLYVDKMVPRTFRTVDN) form a dimerization region.

The protein belongs to the polypeptide deformylase family. In terms of assembly, homodimer. Zn(2+) serves as cofactor. As to expression, expressed in roots, leaves, flowers and siliques.

It localises to the plastid. The protein resides in the chloroplast stroma. It is found in the mitochondrion. It carries out the reaction N-terminal N-formyl-L-methionyl-[peptide] + H2O = N-terminal L-methionyl-[peptide] + formate. Its activity is regulated as follows. Inhibited by actinonin. Its function is as follows. Removes the formyl group from the N-terminal Met of newly synthesized proteins. The polypeptide is Peptide deformylase 1A, chloroplastic/mitochondrial (PDF1A) (Arabidopsis thaliana (Mouse-ear cress)).